The chain runs to 126 residues: Probable S-adenosyl-L-methionine-binding protein MJ1583 (126 aa).

Positions 4-126 (LKPIGVVEQN…FSEKLDCPKI (123 aa)) constitute a TsaA-like domain. S-adenosyl-L-methionine is bound by residues 45–46 (HK), Arg-75, and 106–109 (YNET).

The protein belongs to the tRNA methyltransferase O family.

The protein is Probable S-adenosyl-L-methionine-binding protein MJ1583 of Methanocaldococcus jannaschii (strain ATCC 43067 / DSM 2661 / JAL-1 / JCM 10045 / NBRC 100440) (Methanococcus jannaschii).